The primary structure comprises 250 residues: ATP synthase subunit a (250 aa).

Helical transmembrane passes span 26 to 46 (FTNASLFMVATVGAAAGFLYL), 84 to 104 (FFPMVFSLFMFILTANLLGMV), 114 to 134 (IIVTFALAVFVIGTVLLYGFY), 143 to 163 (LFVPQGVPGALLPLVVAIEII), 193 to 213 (FVASLSAFGALGIGGAILPLI), and 216 to 236 (VALTGLEFLVAFLQAYVFAVL).

Belongs to the ATPase A chain family. In terms of assembly, F-type ATPases have 2 components, CF(1) - the catalytic core - and CF(0) - the membrane proton channel. CF(1) has five subunits: alpha(3), beta(3), gamma(1), delta(1), epsilon(1). CF(0) has three main subunits: a(1), b(2) and c(9-12). The alpha and beta chains form an alternating ring which encloses part of the gamma chain. CF(1) is attached to CF(0) by a central stalk formed by the gamma and epsilon chains, while a peripheral stalk is formed by the delta and b chains.

It localises to the cell inner membrane. Its function is as follows. Key component of the proton channel; it plays a direct role in the translocation of protons across the membrane. This chain is ATP synthase subunit a, found in Rhizobium meliloti (strain 1021) (Ensifer meliloti).